The sequence spans 298 residues: Probable GTP 3',8-cyclase (298 aa).

In terms of domain architecture, Radical SAM core spans 4 to 227 (RYGREIRSFR…MQNRKKYVID (224 aa)). Arg-13 provides a ligand contact to GTP. [4Fe-4S] cluster-binding residues include Cys-20 and Cys-24. An S-adenosyl-L-methionine-binding site is contributed by Tyr-26. Cys-27 provides a ligand contact to [4Fe-4S] cluster. Lys-61 contacts GTP. Gly-65 contacts S-adenosyl-L-methionine. Thr-91 contacts GTP. Residue Ser-115 coordinates S-adenosyl-L-methionine. Position 152 (Lys-152) interacts with GTP. Residues Cys-243 and Cys-246 each coordinate [4Fe-4S] cluster. Residue 248–250 (RIR) coordinates GTP. Position 260 (Cys-260) interacts with [4Fe-4S] cluster.

This sequence belongs to the radical SAM superfamily. MoaA family. [4Fe-4S] cluster is required as a cofactor.

The catalysed reaction is GTP + AH2 + S-adenosyl-L-methionine = (8S)-3',8-cyclo-7,8-dihydroguanosine 5'-triphosphate + 5'-deoxyadenosine + L-methionine + A + H(+). It participates in cofactor biosynthesis; molybdopterin biosynthesis. Catalyzes the cyclization of GTP to (8S)-3',8-cyclo-7,8-dihydroguanosine 5'-triphosphate. The polypeptide is Probable GTP 3',8-cyclase (Methanococcus maripaludis (strain C6 / ATCC BAA-1332)).